A 198-amino-acid polypeptide reads, in one-letter code: uncharacterized protein (198 aa).

A disordered region spans residues 51-74 (EEPDNGDDRGSRRTTGQGRKWAAH).

This is an uncharacterized protein from Homo sapiens (Human).